A 145-amino-acid chain; its full sequence is Small ribosomal subunit protein uS12 (145 aa).

The protein belongs to the universal ribosomal protein uS12 family. In terms of assembly, part of the 30S ribosomal subunit.

Its function is as follows. With S4 and S5 plays an important role in translational accuracy. Located at the interface of the 30S and 50S subunits. The polypeptide is Small ribosomal subunit protein uS12 (Cenarchaeum symbiosum (strain A)).